The sequence spans 97 residues: Large ribosomal subunit protein bL28 (97 aa).

The disordered stretch occupies residues 1–20; that stretch reads MSRRCELTAKGPQVGHKVSH.

It belongs to the bacterial ribosomal protein bL28 family.

This Afipia carboxidovorans (strain ATCC 49405 / DSM 1227 / KCTC 32145 / OM5) (Oligotropha carboxidovorans) protein is Large ribosomal subunit protein bL28.